Here is a 176-residue protein sequence, read N- to C-terminus: Small capsomere-interacting protein (176 aa).

Disordered regions lie at residues 75 to 109 (DKRQRASVAGAGAHAHLGGSSATPVQQAQAAASAG) and 148 to 176 (ASAAAAVDTGSGGGGQPHDTAPRGARKKQ). Low complexity predominate over residues 80–109 (ASVAGAGAHAHLGGSSATPVQQAQAAASAG).

The protein belongs to the herpesviridae small capsomere-interacting protein family. In terms of assembly, interacts with the major capsid protein/MCP.

The protein resides in the virion. It localises to the host nucleus. Functionally, participates in the assembly of the infectious particles by decorating the outer surface of the capsid shell and thus forming a layer between the capsid and the tegument. Complexes composed of the major capsid protein and small capsomere-interacting protein/SCP assemble together in the host cytoplasm and are translocated to the nucleus, where they accumulate and participate in capsid assembly. This is Small capsomere-interacting protein from Epstein-Barr virus (strain B95-8) (HHV-4).